The sequence spans 149 residues: Lipoprotein signal peptidase (149 aa).

2 helical membrane passes run tryptophan 58 to leucine 78 and alanine 85 to methionine 105. Active-site residues include aspartate 111 and aspartate 127. The chain crosses the membrane as a helical span at residues isoleucine 122 to phenylalanine 142.

This sequence belongs to the peptidase A8 family.

Its subcellular location is the cell membrane. It catalyses the reaction Release of signal peptides from bacterial membrane prolipoproteins. Hydrolyzes -Xaa-Yaa-Zaa-|-(S,diacylglyceryl)Cys-, in which Xaa is hydrophobic (preferably Leu), and Yaa (Ala or Ser) and Zaa (Gly or Ala) have small, neutral side chains.. It participates in protein modification; lipoprotein biosynthesis (signal peptide cleavage). In terms of biological role, this protein specifically catalyzes the removal of signal peptides from prolipoproteins. The protein is Lipoprotein signal peptidase of Brevibacillus brevis (strain 47 / JCM 6285 / NBRC 100599).